The sequence spans 108 residues: Biogenesis of lysosome-related organelles complex 1 subunit CNL1 (108 aa).

This sequence belongs to the BLOC1S4 family. In terms of assembly, component of the biogenesis of lysosome-related organelles complex-1 (BLOC-1).

It is found in the cytoplasm. Component of the biogenesis of lysosome-related organelles complex-1 (BLOC-1), a complex that is involved in endosomal cargo sorting. This is Biogenesis of lysosome-related organelles complex 1 subunit CNL1 (CLN1) from Zygosaccharomyces rouxii (strain ATCC 2623 / CBS 732 / NBRC 1130 / NCYC 568 / NRRL Y-229).